The chain runs to 893 residues: Protein FAM186B (893 aa).

Disordered stretches follow at residues 177–207 (GWQGRSPQTSPSHPQPLSPEQMLQDQHTMNT), 327–376 (QAED…PSPM), 537–557 (LEKEQESPRREPEQLGEDVER), 574–611 (LSLVPAPSRTQSAHQSRRPHLPMSPSTQQPALGKQRPM), and 806–827 (KPKKCKLPAASPRHIRPSGPTY). Composition is skewed to polar residues over residues 179–188 (QGRSPQTSPS) and 197–207 (QMLQDQHTMNT). Positions 303-331 (RYHDLLLMKQALEFQLKKAQNATGQAEDL) form a coiled coil. Over residues 342 to 353 (SERETLPRKETV) the composition is skewed to basic and acidic residues.

It belongs to the FAM186 family.

The sequence is that of Protein FAM186B (FAM186B) from Homo sapiens (Human).